Consider the following 209-residue polypeptide: Probable phosphatidylglycerophosphatase, mitochondrial (209 aa).

The short motif at 57–61 (DKDNC) is the Phosphoryl acceptor element.

Belongs to the GEP4 family.

The protein localises to the mitochondrion inner membrane. It catalyses the reaction a 1,2-diacyl-sn-glycero-3-phospho-(1'-sn-glycero-3'-phosphate) + H2O = a 1,2-diacyl-sn-glycero-3-phospho-(1'-sn-glycerol) + phosphate. Its pathway is phospholipid metabolism; phosphatidylglycerol biosynthesis; phosphatidylglycerol from CDP-diacylglycerol: step 2/2. Functionally, phosphatidylglycerophosphatase involved in the biosynthesis of cardiolipin (CL), a unique dimeric phosphoglycerolipid predominantly present in mitochondrial membranes and which has important functions for cellular energy metabolism, mitochondrial dynamics and the initiation of apoptotic pathways. The polypeptide is Probable phosphatidylglycerophosphatase, mitochondrial (gep4) (Schizosaccharomyces pombe (strain 972 / ATCC 24843) (Fission yeast)).